The chain runs to 931 residues: Translation initiation factor IF-2 (931 aa).

The interval 32 to 310 is disordered; sequence KSASSTVEPP…SSKARKNRLA (279 aa). Over residues 50–59 the composition is skewed to polar residues; the sequence is FASSGQGNAS. Residues 82-96 show a composition bias toward pro residues; sequence PAAPSAPKPAAPAAP. The span at 156–168 shows a compositional bias: low complexity; that stretch reads GNAPQGGNNANGA. Gly residues-rich tracts occupy residues 217–238, 248–271, and 281–298; these read RPGQ…GGAK, GQGG…GFQG, and ARGG…GRQG. Residues 424–596 form the tr-type G domain; that stretch reads PRPPVVTVMG…VLLTADAELD (173 aa). The G1 stretch occupies residues 433–440; that stretch reads GHVDHGKT. Residue 433 to 440 coordinates GTP; sequence GHVDHGKT. The segment at 458–462 is G2; it reads GITQR. Positions 483-486 are G3; that stretch reads DTPG. Residues 483–487 and 537–540 contribute to the GTP site; these read DTPGH and NKID. A G4 region spans residues 537–540; the sequence is NKID. The interval 573 to 575 is G5; sequence SAK.

It belongs to the TRAFAC class translation factor GTPase superfamily. Classic translation factor GTPase family. IF-2 subfamily.

The protein resides in the cytoplasm. Its function is as follows. One of the essential components for the initiation of protein synthesis. Protects formylmethionyl-tRNA from spontaneous hydrolysis and promotes its binding to the 30S ribosomal subunits. Also involved in the hydrolysis of GTP during the formation of the 70S ribosomal complex. This is Translation initiation factor IF-2 from Bifidobacterium adolescentis (strain ATCC 15703 / DSM 20083 / NCTC 11814 / E194a).